The sequence spans 582 residues: Aspartate--tRNA ligase (582 aa).

Glu-174 lines the L-aspartate pocket. Residues 198–201 (QITK) are aspartate. Residue Arg-220 participates in L-aspartate binding. ATP is bound by residues 220–222 (RDE) and Gln-229. His-443 contacts L-aspartate. Glu-477 contacts ATP. Arg-484 is a binding site for L-aspartate. 529–532 (GLDR) is a binding site for ATP.

This sequence belongs to the class-II aminoacyl-tRNA synthetase family. Type 1 subfamily. As to quaternary structure, homodimer.

The protein localises to the cytoplasm. The enzyme catalyses tRNA(Asp) + L-aspartate + ATP = L-aspartyl-tRNA(Asp) + AMP + diphosphate. Its function is as follows. Catalyzes the attachment of L-aspartate to tRNA(Asp) in a two-step reaction: L-aspartate is first activated by ATP to form Asp-AMP and then transferred to the acceptor end of tRNA(Asp). The chain is Aspartate--tRNA ligase from Streptococcus pyogenes serotype M5 (strain Manfredo).